Consider the following 345-residue polypeptide: MTPDPRLADSAFLKAARGEPVPHTPVWYMRQAGRSLPEYLAVREGIGMLESCMDPDLVVEITLQPVRRYGVDAAIFFSDIVLPLKAVGVDLDIKPGVGPVVAHPVRTLADVEAIPDLTPEHVPFITEAVRGLVGELGGTPLIGFAGAPFTVASYLVEGGPSKEHARTKAMMFGAPDVWDALLRKIAGISASYLEVQVAAGASAVQLFDSWAGALTPADYRAFVMPHSARVLERAGALGVPRIHFGVGTANLLGLMGEAGADVVGVDWRTPLAHAIALVGDRGVQGNLDPTLVFAPTEVMTARAAEIVEAGRAARGHIFNLGHGVIPSTDPDQLKRLTEFVQTYPR.

Substrate-binding positions include 30–34, Asp-79, Tyr-154, Ser-209, and His-322; that span reads RQAGR.

Belongs to the uroporphyrinogen decarboxylase family. As to quaternary structure, homodimer.

It localises to the cytoplasm. The enzyme catalyses uroporphyrinogen III + 4 H(+) = coproporphyrinogen III + 4 CO2. It participates in porphyrin-containing compound metabolism; protoporphyrin-IX biosynthesis; coproporphyrinogen-III from 5-aminolevulinate: step 4/4. Its function is as follows. Catalyzes the decarboxylation of four acetate groups of uroporphyrinogen-III to yield coproporphyrinogen-III. The chain is Uroporphyrinogen decarboxylase from Nocardioides sp. (strain ATCC BAA-499 / JS614).